Reading from the N-terminus, the 519-residue chain is ATP synthase subunit alpha 2 (519 aa).

179–186 (GDRQTGKT) contributes to the ATP binding site.

Belongs to the ATPase alpha/beta chains family. In terms of assembly, F-type ATPases have 2 components, CF(1) - the catalytic core - and CF(0) - the membrane proton channel. CF(1) has five subunits: alpha(3), beta(3), gamma(1), delta(1), epsilon(1). CF(0) has three main subunits: a(1), b(2) and c(9-12). The alpha and beta chains form an alternating ring which encloses part of the gamma chain. CF(1) is attached to CF(0) by a central stalk formed by the gamma and epsilon chains, while a peripheral stalk is formed by the delta and b chains.

Its subcellular location is the cell inner membrane. The catalysed reaction is ATP + H2O + 4 H(+)(in) = ADP + phosphate + 5 H(+)(out). Produces ATP from ADP in the presence of a proton gradient across the membrane. The alpha chain is a regulatory subunit. This chain is ATP synthase subunit alpha 2, found in Syntrophus aciditrophicus (strain SB).